The following is a 258-amino-acid chain: UPF0246 protein YaaA (258 aa).

It belongs to the UPF0246 family.

The protein is UPF0246 protein YaaA of Escherichia coli (strain SE11).